The following is a 55-amino-acid chain: Large ribosomal subunit protein bL32 (55 aa).

Basic residues predominate over residues 1 to 19 (MAVPKFKKSRANTRARRSQ). Residues 1–22 (MAVPKFKKSRANTRARRSQWKA) are disordered.

The protein belongs to the bacterial ribosomal protein bL32 family.

The chain is Large ribosomal subunit protein bL32 from Corynebacterium urealyticum (strain ATCC 43042 / DSM 7109).